Consider the following 170-residue polypeptide: MIIYKDLLSGDEMFSNIYKIRELEGGILLEVEGKRITRTEAIDDSAFGANPSAEELSEANEAAVSSGVDIILNHKLISTLYNKKQYSAYIKKYMKDLKTKLEETNPERVDAFVAGAVGAVKMILGKFKDFEFYTGESMNHDAMVGLLDYREDGITPIMLFFKDGLEIEKC.

Residues 1–170 (MIIYKDLLSG…FKDGLEIEKC (170 aa)) enclose the TCTP domain.

This sequence belongs to the TCTP family.

It is found in the cytoplasm. Its function is as follows. Involved in calcium binding and microtubule stabilization. The polypeptide is Translationally-controlled tumor protein homolog (tpt1) (Scophthalmus maximus (Turbot)).